Reading from the N-terminus, the 65-residue chain is Sec-independent protein translocase protein TatA (65 aa).

A helical transmembrane segment spans residues Ile-9 to Gly-29. Residues Arg-40–Glu-65 are disordered. The segment covering Ser-43 to Glu-65 has biased composition (basic and acidic residues).

The protein belongs to the TatA/E family. As to quaternary structure, forms a complex with TatC.

The protein resides in the cell membrane. In terms of biological role, part of the twin-arginine translocation (Tat) system that transports large folded proteins containing a characteristic twin-arginine motif in their signal peptide across membranes. TatA could form the protein-conducting channel of the Tat system. This chain is Sec-independent protein translocase protein TatA, found in Dehalococcoides mccartyi (strain ATCC BAA-2100 / JCM 16839 / KCTC 5957 / BAV1).